A 103-amino-acid chain; its full sequence is Small ribosomal subunit protein uS10 (103 aa).

The protein belongs to the universal ribosomal protein uS10 family. Part of the 30S ribosomal subunit.

Its function is as follows. Involved in the binding of tRNA to the ribosomes. The chain is Small ribosomal subunit protein uS10 from Ruthia magnifica subsp. Calyptogena magnifica.